Consider the following 413-residue polypeptide: Multifunctional CCA protein (413 aa).

ATP-binding residues include Gly-8 and Arg-11. CTP contacts are provided by Gly-8 and Arg-11. Positions 21 and 23 each coordinate Mg(2+). 3 residues coordinate ATP: Arg-91, Arg-143, and Arg-146. Positions 91, 143, and 146 each coordinate CTP. The region spanning 232–333 (TGVHVMMVVD…VRLFERSDAL (102 aa)) is the HD domain.

The protein belongs to the tRNA nucleotidyltransferase/poly(A) polymerase family. Bacterial CCA-adding enzyme type 1 subfamily. In terms of assembly, monomer. Can also form homodimers and oligomers. Mg(2+) serves as cofactor. It depends on Ni(2+) as a cofactor.

The enzyme catalyses a tRNA precursor + 2 CTP + ATP = a tRNA with a 3' CCA end + 3 diphosphate. The catalysed reaction is a tRNA with a 3' CCA end + 2 CTP + ATP = a tRNA with a 3' CCACCA end + 3 diphosphate. In terms of biological role, catalyzes the addition and repair of the essential 3'-terminal CCA sequence in tRNAs without using a nucleic acid template. Adds these three nucleotides in the order of C, C, and A to the tRNA nucleotide-73, using CTP and ATP as substrates and producing inorganic pyrophosphate. tRNA 3'-terminal CCA addition is required both for tRNA processing and repair. Also involved in tRNA surveillance by mediating tandem CCA addition to generate a CCACCA at the 3' terminus of unstable tRNAs. While stable tRNAs receive only 3'-terminal CCA, unstable tRNAs are marked with CCACCA and rapidly degraded. The chain is Multifunctional CCA protein from Burkholderia cenocepacia (strain HI2424).